The primary structure comprises 429 residues: Nocturnin (429 aa).

A mitochondrion-targeting transit peptide spans 1-73 (MYQSPRRLCS…SMGNGTSRLY (73 aa)). Residues 21-68 (RRTLVPGPRRTLAPPVLGSRPKSPQLQAAAASGAARSRPRTVSSMGNG) are disordered. Glu-193 is a binding site for Mg(2+). Residues Glu-193, 217–219 (KPW), Asn-261, 284–287 (HLKA), and 322–324 (DFN) contribute to the substrate site. Residues 341 to 351 (NLNSAYKLLSP) are interaction with PPARG. His-412 contacts substrate.

The protein belongs to the CCR4/nocturin family. In terms of assembly, interacts with PPARG. Mg(2+) is required as a cofactor. Highly expressed in the differentiated adipocyte (at protein level). Ubiquitous.

It localises to the cytoplasm. Its subcellular location is the nucleus. It is found in the perinuclear region. The protein resides in the mitochondrion. The enzyme catalyses NADP(+) + H2O = phosphate + NAD(+). The catalysed reaction is NADPH + H2O = phosphate + NADH. In terms of biological role, phosphatase which catalyzes the conversion of NADP(+) to NAD(+) and of NADPH to NADH. Shows a small preference for NADPH over NADP(+). Represses translation and promotes degradation of target mRNA molecules. Plays an important role in post-transcriptional regulation of metabolic genes under circadian control. Exerts a rhythmic post-transcriptional control of genes necessary for metabolic functions including nutrient absorption, glucose/insulin sensitivity, lipid metabolism, adipogenesis, inflammation and osteogenesis. Plays an important role in favoring adipogenesis over osteoblastogenesis and acts as a key regulator of the adipogenesis/osteogenesis balance. Promotes adipogenesis by facilitating PPARG nuclear translocation which activates its transcriptional activity. Regulates circadian expression of NOS2 in the liver and negatively regulates the circadian expression of IGF1 in the bone. Critical for proper development of early embryos. The protein is Nocturnin of Mus musculus (Mouse).